The primary structure comprises 142 residues: Large ribosomal subunit protein bL17 (142 aa).

The protein belongs to the bacterial ribosomal protein bL17 family. In terms of assembly, part of the 50S ribosomal subunit. Contacts protein L32.

The sequence is that of Large ribosomal subunit protein bL17 from Rickettsia bellii (strain OSU 85-389).